We begin with the raw amino-acid sequence, 444 residues long: uncharacterized protein (444 aa).

The next 14 membrane-spanning stretches (helical) occupy residues 9–29 (LIVSLLLGAILVPINSTMIAV), 42–62 (IASITWVVTVYLIVMAVTQPI), 82–102 (LFLIASLGCALSPSLLLLIVF), 104–126 (ALQAVGGALLTPNSIAIIRHVVS), 136–156 (FFGLGAGLGAALGPFIGSILI), 164–184 (IFWVNIPFLAIALFTALTMFP), 193–213 (APLDIIGSLLLAGSIVSIILL), 217–237 (EAPWGYTVYSVLILLFVPLFF), 263–283 (LSVLLSNLMMYAVLLIMPLFM), 295–315 (GMALSVFSIFMSASNWVGAQL), 324–344 (IIFLSFAMMAGANLLFLLLSS), 347–367 (SVLFLMLSLILGGLASGVGLT), 387–407 (GIFSTFRYFGSIISSALIGLI), and 411–431 (HTLFMILFAVSIIGVFVSLGI).

It belongs to the major facilitator superfamily. TCR/Tet family.

The protein localises to the cell membrane. This is an uncharacterized protein from Bacillus subtilis (strain 168).